A 100-amino-acid chain; its full sequence is uncharacterized protein (100 aa).

This is an uncharacterized protein from Lactuca sativa (Garden lettuce).